The following is a 254-amino-acid chain: Imidazole glycerol phosphate synthase subunit HisF (254 aa).

Active-site residues include D12 and D131.

This sequence belongs to the HisA/HisF family. Heterodimer of HisH and HisF.

Its subcellular location is the cytoplasm. The enzyme catalyses 5-[(5-phospho-1-deoxy-D-ribulos-1-ylimino)methylamino]-1-(5-phospho-beta-D-ribosyl)imidazole-4-carboxamide + L-glutamine = D-erythro-1-(imidazol-4-yl)glycerol 3-phosphate + 5-amino-1-(5-phospho-beta-D-ribosyl)imidazole-4-carboxamide + L-glutamate + H(+). It participates in amino-acid biosynthesis; L-histidine biosynthesis; L-histidine from 5-phospho-alpha-D-ribose 1-diphosphate: step 5/9. Its function is as follows. IGPS catalyzes the conversion of PRFAR and glutamine to IGP, AICAR and glutamate. The HisF subunit catalyzes the cyclization activity that produces IGP and AICAR from PRFAR using the ammonia provided by the HisH subunit. This chain is Imidazole glycerol phosphate synthase subunit HisF, found in Janthinobacterium sp. (strain Marseille) (Minibacterium massiliensis).